The sequence spans 387 residues: Cysteine desulfurase (387 aa).

Pyridoxal 5'-phosphate contacts are provided by residues 72–73 (GT), Asn-152, Gln-180, and 200–202 (SAH). Lys-203 carries the post-translational modification N6-(pyridoxal phosphate)lysine. Thr-238 is a pyridoxal 5'-phosphate binding site. The active-site Cysteine persulfide intermediate is the Cys-326. Cys-326 serves as a coordination point for [2Fe-2S] cluster.

Belongs to the class-V pyridoxal-phosphate-dependent aminotransferase family. NifS/IscS subfamily. In terms of assembly, homodimer. Pyridoxal 5'-phosphate serves as cofactor.

The enzyme catalyses (sulfur carrier)-H + L-cysteine = (sulfur carrier)-SH + L-alanine. Catalyzes the removal of elemental sulfur atoms from cysteine to produce alanine. Seems to participate in the biosynthesis of the nitrogenase metalloclusters by providing the inorganic sulfur required for the Fe-S core formation. The chain is Cysteine desulfurase from Sinorhizobium fredii (strain NBRC 101917 / NGR234).